Reading from the N-terminus, the 403-residue chain is Imidazolonepropionase (403 aa).

His74 and His76 together coordinate Fe(3+). His74 and His76 together coordinate Zn(2+). Residues Arg83, Tyr146, and His179 each coordinate 4-imidazolone-5-propanoate. Tyr146 is an N-formimidoyl-L-glutamate binding site. His242 is a Fe(3+) binding site. His242 serves as a coordination point for Zn(2+). Gln245 serves as a coordination point for 4-imidazolone-5-propanoate. Position 317 (Asp317) interacts with Fe(3+). Asp317 contributes to the Zn(2+) binding site. Residues Asn319 and Gly321 each coordinate N-formimidoyl-L-glutamate. Thr322 contributes to the 4-imidazolone-5-propanoate binding site.

It belongs to the metallo-dependent hydrolases superfamily. HutI family. It depends on Zn(2+) as a cofactor. The cofactor is Fe(3+).

Its subcellular location is the cytoplasm. It carries out the reaction 4-imidazolone-5-propanoate + H2O = N-formimidoyl-L-glutamate. It participates in amino-acid degradation; L-histidine degradation into L-glutamate; N-formimidoyl-L-glutamate from L-histidine: step 3/3. Catalyzes the hydrolytic cleavage of the carbon-nitrogen bond in imidazolone-5-propanoate to yield N-formimidoyl-L-glutamate. It is the third step in the universal histidine degradation pathway. The protein is Imidazolonepropionase of Sphingopyxis alaskensis (strain DSM 13593 / LMG 18877 / RB2256) (Sphingomonas alaskensis).